The sequence spans 302 residues: Pseudouridine-5'-phosphate glycosidase (302 aa).

Residue E25 is the Proton donor of the active site. Substrate is bound by residues K86 and V106. Mn(2+) is bound at residue D138. 140-142 (SAD) lines the substrate pocket. K159 acts as the Nucleophile in catalysis.

The protein belongs to the pseudouridine-5'-phosphate glycosidase family. As to quaternary structure, homotrimer. Mn(2+) serves as cofactor.

It carries out the reaction D-ribose 5-phosphate + uracil = psi-UMP + H2O. In terms of biological role, catalyzes the reversible cleavage of pseudouridine 5'-phosphate (PsiMP) to ribose 5-phosphate and uracil. Functions biologically in the cleavage direction, as part of a pseudouridine degradation pathway. This Glaesserella parasuis serovar 5 (strain SH0165) (Haemophilus parasuis) protein is Pseudouridine-5'-phosphate glycosidase.